Reading from the N-terminus, the 566-residue chain is 3'-5' exoribonuclease parn-1 (566 aa).

Residues Asp29, Glu31, Asp283, and Asp379 each coordinate a divalent metal cation.

The protein belongs to the CAF1 family. A divalent metal cation serves as cofactor. In terms of tissue distribution, expressed in germline cells.

It is found in the cytoplasm. Involved in transcriptome surveillance. Required for piwi-interacting RNAs (piRNAs) 3'-end trimming, which is important for both fertility and piRNA-directed gene silencing. Has 3' to 5' exonuclease activity in vitro. The sequence is that of 3'-5' exoribonuclease parn-1 from Caenorhabditis elegans.